The primary structure comprises 244 residues: Phosphoadenosine 5'-phosphosulfate reductase (244 aa).

Cys239 acts as the Nucleophile; cysteine thiosulfonate intermediate in catalysis.

This sequence belongs to the PAPS reductase family. CysH subfamily.

It is found in the cytoplasm. It catalyses the reaction [thioredoxin]-disulfide + sulfite + adenosine 3',5'-bisphosphate + 2 H(+) = [thioredoxin]-dithiol + 3'-phosphoadenylyl sulfate. It participates in sulfur metabolism; hydrogen sulfide biosynthesis; sulfite from sulfate: step 3/3. Catalyzes the formation of sulfite from phosphoadenosine 5'-phosphosulfate (PAPS) using thioredoxin as an electron donor. This Shigella dysenteriae serotype 1 (strain Sd197) protein is Phosphoadenosine 5'-phosphosulfate reductase.